Here is a 257-residue protein sequence, read N- to C-terminus: Acetylglutamate kinase (257 aa).

Residues 43–44, R65, and N157 contribute to the substrate site; that span reads GG. ATP-binding positions include 180-185 and 208-210; these read DVSGIL and IIT.

This sequence belongs to the acetylglutamate kinase family. ArgB subfamily. Homodimer.

Its subcellular location is the cytoplasm. It carries out the reaction N-acetyl-L-glutamate + ATP = N-acetyl-L-glutamyl 5-phosphate + ADP. The protein operates within amino-acid biosynthesis; L-arginine biosynthesis; N(2)-acetyl-L-ornithine from L-glutamate: step 2/4. In terms of biological role, catalyzes the ATP-dependent phosphorylation of N-acetyl-L-glutamate. The sequence is that of Acetylglutamate kinase from Enterobacter sp. (strain 638).